Here is a 119-residue protein sequence, read N- to C-terminus: Non-specific lipid-transfer protein 3 (119 aa).

An N-terminal signal peptide occupies residues 1–24 (MARSMKLACVVLAMCMLVAPMAEA). Cystine bridges form between Cys-28–Cys-77, Cys-38–Cys-54, Cys-55–Cys-100, and Cys-75–Cys-114.

Belongs to the plant LTP family. In terms of tissue distribution, expressed in roots, stem, leaves and tendrils of the mature plant.

Its function is as follows. Plant non-specific lipid-transfer proteins transfer phospholipids as well as galactolipids across membranes. May play a role in wax or cutin deposition in the cell walls of expanding epidermal cells and certain secretory tissues. This chain is Non-specific lipid-transfer protein 3, found in Pisum sativum (Garden pea).